Here is a 688-residue protein sequence, read N- to C-terminus: Complement C1s subcomponent (688 aa).

Residues methionine 1–alanine 15 form the signal peptide. Positions glutamate 16–valine 130 constitute a CUB 1 domain. Residues glutamate 60, aspartate 68, aspartate 113, aspartate 131, valine 132, and glutamate 134 each contribute to the Ca(2+) site. The cysteines at positions 65 and 83 are disulfide-linked. The EGF-like; calcium-binding domain maps to aspartate 131–glycine 172. 3 disulfide bridges follow: cysteine 135/cysteine 147, cysteine 143/cysteine 156, and cysteine 158/cysteine 171. 3 residues coordinate Ca(2+): asparagine 149, phenylalanine 150, and glycine 153. A (3R)-3-hydroxyasparagine modification is found at asparagine 149. N-linked (GlcNAc...) asparagine glycosylation is present at asparagine 174. Cysteine 175 and cysteine 202 are oxidised to a cystine. Positions cysteine 175–aspartate 290 constitute a CUB 2 domain. Ca(2+) contacts are provided by glutamate 226, aspartate 236, aspartate 275, glycine 278, and glutamine 279. Residues cysteine 234 and cysteine 251 are joined by a disulfide bond. Sushi domains follow at residues isoleucine 292 to proline 356 and valine 357 to proline 423. Disulfide bonds link cysteine 294–cysteine 341, cysteine 321–cysteine 354, cysteine 359–cysteine 403, cysteine 386–cysteine 421, cysteine 425–cysteine 549, cysteine 595–cysteine 618, and cysteine 627–cysteine 659. N-linked (GlcNAc...) asparagine glycosylation is present at asparagine 406. Residues isoleucine 438–glutamine 680 enclose the Peptidase S1 domain. Residues histidine 475 and aspartate 529 each act as charge relay system in the active site. Serine 631 functions as the Charge relay system in the catalytic mechanism.

Belongs to the peptidase S1 family. As to quaternary structure, core component of the complement C1 complex, a calcium-dependent complex composed of 1 molecule of the C1Q subcomplex, 2 molecules of C1R and 2 molecules of C1S. The C1Q subcomplex is composed 18 subunits: 3 chains of C1QA, C1QB, and C1QC trimerize to form 6 collagen-like triple helices connected to six globular ligand-recognition modules. In terms of processing, cleaved and activated by C1R to generate Complement C1s subcomponent heavy and light chains. Post-translationally, the iron and 2-oxoglutarate dependent 3-hydroxylation of aspartate and asparagine is (R) stereospecific within EGF domains.

The protein resides in the secreted. Its subcellular location is the cell surface. It catalyses the reaction Cleavage of Arg-|-Ala bond in complement component C4 to form C4a and C4b, and Lys(or Arg)-|-Lys bond in complement component C2 to form C2a and C2b: the 'classical' pathway C3 convertase.. Its activity is regulated as follows. Cleaved and activated by C1R. Immunoglobulin-binding promotes autoactivation of C1R, which results in the cleavage of the Arg-Ile bond in the catalytic domain. Inhibited by C1 inhibitor (SERPING1). Functionally, component of the complement C1 complex, a multiprotein complex that initiates the classical pathway of the complement system, a cascade of proteins that leads to phagocytosis and breakdown of pathogens and signaling that strengthens the adaptive immune system. C1S is activated following association of the C1 complex with immunoglobulins (IgG or IgM) complexed with antigens to form antigen-antibody complexes on the surface of pathogens. C1S is cleaved and activated by C1R to generate C1s subcomponent heavy and light chains. C1s subcomponent light chain then cleaves and activates C2 and C4, the next components of the classical complement pathway. In terms of biological role, serine protease component of the complement C1 complex, which catalyzes cleavage and activation of C2 and C4, the next components of the classical complement pathway. Also cleaves IGFBP5 and thereby inhibits the trophic effects of IGF1. The sequence is that of Complement C1s subcomponent from Rattus norvegicus (Rat).